The following is a 245-amino-acid chain: 1-(5-phosphoribosyl)-5-[(5-phosphoribosylamino)methylideneamino] imidazole-4-carboxamide isomerase (245 aa).

The Proton acceptor role is filled by D7. Residue D129 is the Proton donor of the active site.

It belongs to the HisA/HisF family.

It is found in the cytoplasm. The enzyme catalyses 1-(5-phospho-beta-D-ribosyl)-5-[(5-phospho-beta-D-ribosylamino)methylideneamino]imidazole-4-carboxamide = 5-[(5-phospho-1-deoxy-D-ribulos-1-ylimino)methylamino]-1-(5-phospho-beta-D-ribosyl)imidazole-4-carboxamide. It functions in the pathway amino-acid biosynthesis; L-histidine biosynthesis; L-histidine from 5-phospho-alpha-D-ribose 1-diphosphate: step 4/9. In Shewanella baltica (strain OS155 / ATCC BAA-1091), this protein is 1-(5-phosphoribosyl)-5-[(5-phosphoribosylamino)methylideneamino] imidazole-4-carboxamide isomerase.